The sequence spans 139 residues: uncharacterized protein (139 aa).

The next 3 membrane-spanning stretches (helical) occupy residues C19–G39, I64–F84, and A89–G109.

It is found in the cell membrane. This is an uncharacterized protein from Methanocaldococcus jannaschii (strain ATCC 43067 / DSM 2661 / JAL-1 / JCM 10045 / NBRC 100440) (Methanococcus jannaschii).